The sequence spans 425 residues: UDP-N-acetylglucosamine 1-carboxyvinyltransferase (425 aa).

22 to 23 is a binding site for phosphoenolpyruvate; it reads KN. Arginine 98 contributes to the UDP-N-acetyl-alpha-D-glucosamine binding site. The Proton donor role is filled by cysteine 122. Cysteine 122 carries the post-translational modification 2-(S-cysteinyl)pyruvic acid O-phosphothioketal. UDP-N-acetyl-alpha-D-glucosamine contacts are provided by residues 127–131, aspartate 313, and isoleucine 335; that span reads RPVDQ.

It belongs to the EPSP synthase family. MurA subfamily.

It is found in the cytoplasm. The enzyme catalyses phosphoenolpyruvate + UDP-N-acetyl-alpha-D-glucosamine = UDP-N-acetyl-3-O-(1-carboxyvinyl)-alpha-D-glucosamine + phosphate. It participates in cell wall biogenesis; peptidoglycan biosynthesis. Cell wall formation. Adds enolpyruvyl to UDP-N-acetylglucosamine. This chain is UDP-N-acetylglucosamine 1-carboxyvinyltransferase, found in Xylella fastidiosa (strain M12).